We begin with the raw amino-acid sequence, 338 residues long: L-serine dehydratase (338 aa).

K39 bears the N6-(pyridoxal phosphate)lysine mark.

Belongs to the serine/threonine dehydratase family. Pyridoxal 5'-phosphate is required as a cofactor.

The protein resides in the cytoplasm. The enzyme catalyses L-serine = pyruvate + NH4(+). Its pathway is carbohydrate biosynthesis; gluconeogenesis. The protein is L-serine dehydratase (SDL1) of Saccharomyces cerevisiae (strain AWRI1631) (Baker's yeast).